A 393-amino-acid chain; its full sequence is Ig gamma-1 chain C region, membrane-bound form (393 aa).

The tract at residues 1 to 97 is CH1; it reads AKTTPPSVYP…ASSTKVDKKI (97 aa). An intrachain disulfide couples C27 to C82. The interval 98–110 is hinge; the sequence is VPRDCGCKPCICT. The CH2 stretch occupies residues 111 to 217; sequence VPEVSSVFIF…PIEKTISKTK (107 aa). Intrachain disulfides connect C138–C198 and C244–C302. A glycan (N-linked (GlcNAc...) asparagine) is linked at N174. Positions 218 to 324 are CH3; it reads GRPKAPQVYT…EKSLSHSPGL (107 aa). The helical transmembrane segment at 340 to 357 threads the bilayer; sequence GLWTTITIFISLFLLSVC. Residues 358-393 are Cytoplasmic-facing; it reads YSAAVTLFKVKWIFSSVVELKQTLVPEYKNMIGQAP.

Its subcellular location is the cell membrane. This Mus musculus (Mouse) protein is Ig gamma-1 chain C region, membrane-bound form (Ighg1).